The sequence spans 72 residues: Translation initiation factor IF-1 (72 aa).

The 72-residue stretch at 1 to 72 folds into the S1-like domain; that stretch reads MSKDDVIEID…DKGRITYRYK (72 aa).

Belongs to the IF-1 family. Component of the 30S ribosomal translation pre-initiation complex which assembles on the 30S ribosome in the order IF-2 and IF-3, IF-1 and N-formylmethionyl-tRNA(fMet); mRNA recruitment can occur at any time during PIC assembly.

Its subcellular location is the cytoplasm. Its function is as follows. One of the essential components for the initiation of protein synthesis. Stabilizes the binding of IF-2 and IF-3 on the 30S subunit to which N-formylmethionyl-tRNA(fMet) subsequently binds. Helps modulate mRNA selection, yielding the 30S pre-initiation complex (PIC). Upon addition of the 50S ribosomal subunit IF-1, IF-2 and IF-3 are released leaving the mature 70S translation initiation complex. In Campylobacter hominis (strain ATCC BAA-381 / DSM 21671 / CCUG 45161 / LMG 19568 / NCTC 13146 / CH001A), this protein is Translation initiation factor IF-1.